Reading from the N-terminus, the 183-residue chain is MKQLLDFLPLVIFFAVYKLFDIYAASGALIAATALQLIVTYLLYKKIEKMHLITFVMVTVFGTLTLVFHDDAFIKWKVTVVYALFAIALAVSQLINKPILKSMLGKELVVEDRIWAHVTWYWVSFFITCALVNIYVAFSLPQEVWVNFKVFGLTALTLVNTVITVIYLYKNMPEEHKKELNNK.

The next 5 helical transmembrane spans lie at 10-30 (LVIF…GALI), 50-70 (MHLI…VFHD), 72-92 (AFIK…LAVS), 118-138 (VTWY…YVAF), and 148-168 (FKVF…VIYL).

The protein belongs to the YciB family.

The protein localises to the cell inner membrane. In terms of biological role, plays a role in cell envelope biogenesis, maintenance of cell envelope integrity and membrane homeostasis. The sequence is that of Inner membrane-spanning protein YciB from Shewanella sediminis (strain HAW-EB3).